We begin with the raw amino-acid sequence, 180 residues long: Large ribosomal subunit protein uL5 (180 aa).

This sequence belongs to the universal ribosomal protein uL5 family. As to quaternary structure, part of the 50S ribosomal subunit; part of the 5S rRNA/L5/L18/L25 subcomplex. Contacts the 5S rRNA and the P site tRNA. Forms a bridge to the 30S subunit in the 70S ribosome.

In terms of biological role, this is one of the proteins that bind and probably mediate the attachment of the 5S RNA into the large ribosomal subunit, where it forms part of the central protuberance. In the 70S ribosome it contacts protein S13 of the 30S subunit (bridge B1b), connecting the 2 subunits; this bridge is implicated in subunit movement. Contacts the P site tRNA; the 5S rRNA and some of its associated proteins might help stabilize positioning of ribosome-bound tRNAs. The protein is Large ribosomal subunit protein uL5 of Anaeromyxobacter dehalogenans (strain 2CP-1 / ATCC BAA-258).